Consider the following 1119-residue polypeptide: DNA-directed RNA polymerase subunit beta (1119 aa).

Belongs to the RNA polymerase beta chain family. In terms of assembly, the RNAP catalytic core consists of 2 alpha, 1 beta, 1 beta' and 1 omega subunit. When a sigma factor is associated with the core the holoenzyme is formed, which can initiate transcription.

The catalysed reaction is RNA(n) + a ribonucleoside 5'-triphosphate = RNA(n+1) + diphosphate. Functionally, DNA-dependent RNA polymerase catalyzes the transcription of DNA into RNA using the four ribonucleoside triphosphates as substrates. The polypeptide is DNA-directed RNA polymerase subunit beta (Thermus aquaticus).